A 585-amino-acid polypeptide reads, in one-letter code: Lipoprotein LpqB (585 aa).

Positions 1-17 (MGRKLLGLLMLAVLLAG) are cleaved as a signal peptide. A lipid anchor (N-palmitoyl cysteine) is attached at Cys18. Cys18 is lipidated: S-diacylglycerol cysteine. 2 disordered regions span residues 24–48 (SSAP…TPGM) and 560–585 (PSAD…VLPG).

The protein belongs to the LpqB lipoprotein family.

The protein localises to the cell membrane. This is Lipoprotein LpqB from Mycolicibacterium paratuberculosis (strain ATCC BAA-968 / K-10) (Mycobacterium paratuberculosis).